The primary structure comprises 356 residues: Probable scoulerine-9-O-methyltransferase OMT2B (356 aa).

Methionine 173 contacts S-adenosyl-L-methionine. Aspartate 176 is a binding site for substrate. Residues threonine 177, glycine 202, aspartate 225, 245–246 (DI), and lysine 259 each bind S-adenosyl-L-methionine. 260–264 (YVLHN) lines the substrate pocket. The Proton acceptor role is filled by histidine 263.

It belongs to the class I-like SAM-binding methyltransferase superfamily. Cation-independent O-methyltransferase family. COMT subfamily.

It catalyses the reaction (S)-scoulerine + S-adenosyl-L-methionine = (S)-tetrahydrocolumbamine + S-adenosyl-L-homocysteine + H(+). It functions in the pathway alkaloid biosynthesis. Functionally, methyltransferase involved in the biosynthesis of the benzylisoquinoline alkaloid noscapine. Catalyzes the conversion of (S)-scoulerine to (S)-tetrahydrocolumbamine. The heterodimers OMT2B-SOMT3 and OMT2B-6OMT do not possess 3-O-acetyl-4'-O-demethylpapaveroxine 4'-O-methyltransferase activity. This chain is Probable scoulerine-9-O-methyltransferase OMT2B, found in Papaver somniferum (Opium poppy).